A 150-amino-acid polypeptide reads, in one-letter code: uncharacterized protein (150 aa).

The 62-residue stretch at 5–66 folds into the HTH asnC-type domain; the sequence is LDKVDRRLLE…KPNYKKLNLG (62 aa). A DNA-binding region (H-T-H motif) is located at residues 24–43; the sequence is IATLSKKLGIPRTTVHYRIK.

This is an uncharacterized protein from Pyrococcus abyssi (strain GE5 / Orsay).